Consider the following 628-residue polypeptide: MALVSAVPLNSKLCLCRTLFGFSHELKAIHSTVPNLGMCRGGKSIAPSMSMSSTTSVSNEDGVPRRIAGHHSNLWDDDSIASLSTSYEAPSYRERADRVIGEVKNIFDLMSVEDGVFTSPLSDLHHRLWMVDSVERLGIDRHFKHEINSALDHVYSYWTEKGIGRGRESGVTDLNSTALGLRTLRLHGYTVSSHVLDHFKNEKGQFTWSAIQTEGEIRDVLNLFRASLIAFPGEKIMEAAEIFSTMYLKDALQKIPPSGLSQEIEYLLEFGWHTNLPRMETRMYIDVFGEDTTFETPYLIREKLLELAKLEFNIFHSLVKRELQSLTRWWKDYGFPEITFSRHRHVEYYTLAACIANDPKHSAFRLGFGKISHMITILDDIYDTFGTMEELELLTAAFKRWDPSSIECLPDYMKGVYMAVYDNINEMAREAQKIQGWDTVSYARKSWEAFIGAYIQEAKWISSGYLPTFDEYLENGKVSFGSRITTLEPMLTLGFPLPPRILQEIDFPSKFNDLTCAILRLKGDTQCYKADRARGEEASAVSCYMKDHPGITEEDAVNQVNAMVDNLTKELNWELLRPDSGVPISYKKVAFDICRVFHYGYKYRDGFSVASVEIKNLVTRTVVETVPL.

Residues Asp-379, Asp-383, and Asp-531 each coordinate Mg(2+). The DDXXD motif signature appears at 379 to 383; that stretch reads DDIYD.

Belongs to the terpene synthase family. Tpsd subfamily. Mg(2+) is required as a cofactor. It depends on Mn(2+) as a cofactor.

Its subcellular location is the plastid. It is found in the chloroplast. The enzyme catalyses (2E)-geranyl diphosphate = (1R,5R)-alpha-pinene + diphosphate. It functions in the pathway terpene metabolism; oleoresin biosynthesis. It participates in secondary metabolite biosynthesis; terpenoid biosynthesis. Monoterpene synthase (TPS) involved in the biosynthesis of monoterpene natural products included in conifer oleoresin secretions and volatile emissions; these compounds contribute to biotic and abiotic stress defense against herbivores and pathogens. Catalyzes the conversion of (2E)-geranyl diphosphate (GPP) to (+)-alpha-pinene. The protein is (+)-alpha pinene synthase 1, chloroplastic of Pinus contorta (Shore pine).